The chain runs to 169 residues: MQFNKRIDANQLDMKEQVVDIRRVTKVVKGGRNFRFAALVVVGDENGHVGVGTGKAMEIPDAIRKGIQAAKKNLLLVPTVGTTVPHEVIGHFGAGNVLIMPAKEGTGIIAGGPVRAVLELAGIKDVRAKSLGTNNSRNMVSATMDGLRQLKRAEDVAKLRGKSVEELLG.

An S5 DRBM domain is found at 14 to 77 (MKEQVVDIRR…QAAKKNLLLV (64 aa)).

This sequence belongs to the universal ribosomal protein uS5 family. Part of the 30S ribosomal subunit. Contacts proteins S4 and S8.

Functionally, with S4 and S12 plays an important role in translational accuracy. In terms of biological role, located at the back of the 30S subunit body where it stabilizes the conformation of the head with respect to the body. The polypeptide is Small ribosomal subunit protein uS5 (Alkaliphilus metalliredigens (strain QYMF)).